Here is a 91-residue protein sequence, read N- to C-terminus: Acylphosphatase (91 aa).

The region spanning 6–91 (CMRCYISGRV…WEDYISFDVL (86 aa)) is the Acylphosphatase-like domain. Catalysis depends on residues Arg-21 and Asn-39.

It belongs to the acylphosphatase family.

The enzyme catalyses an acyl phosphate + H2O = a carboxylate + phosphate + H(+). The chain is Acylphosphatase (acyP) from Legionella pneumophila (strain Corby).